A 552-amino-acid polypeptide reads, in one-letter code: Mothers against decapentaplegic homolog 4 (552 aa).

Positions 1–322 (MDNMSITNTP…PISNHPAPEY (322 aa)) are mediates interaction with ZBTB7A. The region spanning 18-142 (SIVHSLMCHR…YERVVSPGID (125 aa)) is the MH1 domain. The residue at position 37 (Lys37) is an N6-acetyllysine. The tract at residues 44–69 (VKKLKEKKDELDSLITAITTNGAHPS) is required for interaction with TSC22D1. Cys71 lines the Zn(2+) pocket. A Glycyl lysine isopeptide (Lys-Gly) (interchain with G-Cter in SUMO2) cross-link involves residue Lys113. Residues Cys115, Cys127, and His132 each contribute to the Zn(2+) site. Residues 167-193 (EGQPSLPTEGHSIQTIQHPPSNRASTE) are disordered. Residues 177–193 (HSIQTIQHPPSNRASTE) show a composition bias toward polar residues. The SAD stretch occupies residues 275 to 320 (PYTPNLPHHQNGHLQHHPPMPPHPGHYWPVHNELAFQPPISNHPAP). Positions 323–552 (WCSIAYFEMD…MPIADPQPLD (230 aa)) constitute an MH2 domain. Lys428 and Lys507 each carry N6-acetyllysine. Lys519 is covalently cross-linked (Glycyl lysine isopeptide (Lys-Gly) (interchain with G-Cter in ubiquitin)).

It belongs to the dwarfin/SMAD family. Monomer; in the absence of TGF-beta activation. Heterotrimer; on TGF-beta activation. Heterotrimer composed of two molecules of a C-terminally phosphorylated R-SMAD molecule, SMAD2 or SMAD3, and one molecule of SMAD4 to form the transcriptional active SMAD2/SMAD3-SMAD4 complex. Found in a ternary complex composed of SMAD4, STK11/LKB1 and STK11IP. Found in a complex with SMAD1 and YY1. Identified in a complex that contains at least ZNF451, SMAD2, SMAD3 and SMAD4. Interacts with ATF2, COPS5, DACH1, MSG1, SKI, STK11/LKB1, STK11IP and TRIM33. Associates with ZNF423 or ZNF521 in response to BMP2 leading to activate transcription of BMP target genes. Interacts with USP9X. Interacts with RBPMS. Interacts with WWTR1 (via coiled-coil domain). Interacts with CITED1 and CITED2. Interacts with PDPK1 (via PH domain). Interacts with VPS39; this interaction affects heterodimer formation with SMAD3, but not with SMAD2, and leads to inhibition of SMAD3-dependent transcription activation. Interactions with VPS39 and SMAD2 may be mutually exclusive. Interacts (via MH2 domain) with ZNF451 (via N-terminal zinc-finger domains). Interacts with ZC3H3. Interacts weakly with ZNF8. Interacts with NUP93 and IPO7; translocates SMAD4 to the nucleus through the NPC upon BMP7 stimulation resulting in activation of SMAD4 signaling. Interacts with CREB3L1, the interaction takes place upon TGFB1 induction and SMAD4 acts as a CREB3L1 coactivator to induce the expression of genes involved in the assembly of collagen extracellular matrix. Interacts with DLX1. Interacts with ZBTB7A; the interaction is direct and stimulated by TGFB1. Interacts with CREBBP; the recruitment of this transcriptional coactivator is negatively regulated by ZBTB7A. Interacts with EP300; the interaction with this transcriptional coactivator is negatively regulated by ZBTB7A. Interacts with HDAC1. Interacts (via MH2 domain) with ZMIZ1 (via SP-RING-type domain); in the TGF-beta signaling pathway increases the activity of the SMAD3/SMAD4 transcriptional complex. Interacts (via N-terminus) with TSC22D1. Post-translationally, phosphorylated by PDPK1. Monoubiquitinated on Lys-519 by E3 ubiquitin-protein ligase TRIM33. Monoubiquitination hampers its ability to form a stable complex with activated SMAD2/3 resulting in inhibition of TGF-beta/BMP signaling cascade. Deubiquitination by USP9X restores its competence to mediate TGF-beta signaling.

Its subcellular location is the cytoplasm. The protein resides in the nucleus. Its function is as follows. Common SMAD (co-SMAD) is the coactivator and mediator of signal transduction by TGF-beta (transforming growth factor). Component of the heterotrimeric SMAD2/SMAD3-SMAD4 complex that forms in the nucleus and is required for the TGF-mediated signaling. Promotes binding of the SMAD2/SMAD4/FAST-1 complex to DNA and provides an activation function required for SMAD1 or SMAD2 to stimulate transcription. Component of the multimeric SMAD3/SMAD4/JUN/FOS complex which forms at the AP1 promoter site; required for synergistic transcriptional activity in response to TGF-beta. Acts synergistically with SMAD1 and YY1 in bone morphogenetic protein (BMP)-mediated cardiac-specific gene expression. Binds to SMAD binding elements (SBEs) (5'-GTCT/AGAC-3') within BMP response element (BMPRE) of cardiac activating regions. May act as a tumor suppressor. Positively regulates PDPK1 kinase activity by stimulating its dissociation from the 14-3-3 protein YWHAQ which acts as a negative regulator. In muscle physiology, plays a central role in the balance between atrophy and hypertrophy. When recruited by MSTN, promotes atrophy response via phosphorylated SMAD2/4. MSTN decrease causes SMAD4 release and subsequent recruitment by the BMP pathway to promote hypertrophy via phosphorylated SMAD1/5/8. This chain is Mothers against decapentaplegic homolog 4 (Smad4), found in Rattus norvegicus (Rat).